A 296-amino-acid polypeptide reads, in one-letter code: Elongation factor Ts (296 aa).

Positions 82–85 are involved in Mg(2+) ion dislocation from EF-Tu; the sequence is TDFV.

The protein belongs to the EF-Ts family.

The protein localises to the cytoplasm. In terms of biological role, associates with the EF-Tu.GDP complex and induces the exchange of GDP to GTP. It remains bound to the aminoacyl-tRNA.EF-Tu.GTP complex up to the GTP hydrolysis stage on the ribosome. This Coxiella burnetii (strain CbuG_Q212) (Coxiella burnetii (strain Q212)) protein is Elongation factor Ts.